Consider the following 296-residue polypeptide: Ribosomal protein L11 methyltransferase (296 aa).

Positions 151, 172, 194, and 233 each coordinate S-adenosyl-L-methionine.

This sequence belongs to the methyltransferase superfamily. PrmA family.

It is found in the cytoplasm. The catalysed reaction is L-lysyl-[protein] + 3 S-adenosyl-L-methionine = N(6),N(6),N(6)-trimethyl-L-lysyl-[protein] + 3 S-adenosyl-L-homocysteine + 3 H(+). Functionally, methylates ribosomal protein L11. The chain is Ribosomal protein L11 methyltransferase from Thiobacillus denitrificans (strain ATCC 25259 / T1).